Reading from the N-terminus, the 222-residue chain is Probable transaldolase (222 aa).

K91 (schiff-base intermediate with substrate) is an active-site residue.

This sequence belongs to the transaldolase family. Type 3B subfamily.

The protein resides in the cytoplasm. It catalyses the reaction D-sedoheptulose 7-phosphate + D-glyceraldehyde 3-phosphate = D-erythrose 4-phosphate + beta-D-fructose 6-phosphate. Its pathway is carbohydrate degradation; pentose phosphate pathway; D-glyceraldehyde 3-phosphate and beta-D-fructose 6-phosphate from D-ribose 5-phosphate and D-xylulose 5-phosphate (non-oxidative stage): step 2/3. Transaldolase is important for the balance of metabolites in the pentose-phosphate pathway. This Chlorobaculum tepidum (strain ATCC 49652 / DSM 12025 / NBRC 103806 / TLS) (Chlorobium tepidum) protein is Probable transaldolase.